A 904-amino-acid chain; its full sequence is Pantothenate kinase 2 (904 aa).

Residues Met-1–Leu-56 form a disordered region. The segment at Met-1–Trp-472 is pantothenate kinase. The tract at residues Met-473–Pro-904 is 4'-phosphopantetheine phosphatase. Mn(2+) contacts are provided by Asp-735, Asn-736, and Asp-771. The Subfamily II EGMGR motif signature appears at Glu-855–Arg-859.

This sequence in the N-terminal section; belongs to the type II pantothenate kinase family. The protein in the C-terminal section; belongs to the damage-control phosphatase family. Phosphopantetheine phosphatase II subfamily. The cofactor is Mn(2+). Requires Ni(2+) as cofactor.

The catalysed reaction is (R)-pantothenate + ATP = (R)-4'-phosphopantothenate + ADP + H(+). It carries out the reaction (R)-4'-phosphopantothenate + H2O = (R)-pantothenate + phosphate. It catalyses the reaction (R)-4'-phosphopantetheine + H2O = (R)-pantetheine + phosphate. The enzyme catalyses (R)-4'-phosphopantetheine sulfonate + H2O = (R)-pantetheine sulfonate + phosphate. The protein operates within cofactor biosynthesis; coenzyme A biosynthesis; CoA from (R)-pantothenate: step 1/5. Catalyzes the phosphorylation of pantothenate the first step in CoA biosynthesis. May play a role in the physiological regulation of the intracellular CoA concentration. Functionally redudant with PANK1. The phosphatase activity shows preference for normal or oxidatively damaged intermediates of 4'-phosphopantetheine, which provides strong indirect evidence that the phosphatase activity pre-empts damage in the CoA pathway. Hydrolyzing excess 4'-phosphopantetheine could constitute a directed overflow mechanism to prevent its oxidation to the S-sulfonate, sulfonate, or other forms. Hydrolyzing 4'-phosphopantetheine sulfonate or S-sulfonate would forestall their conversion to inactive forms of CoA and acyl carrier protein. The protein is Pantothenate kinase 2 of Oryza sativa subsp. japonica (Rice).